The sequence spans 746 residues: MGNINKKLFYFLIQLITILIVLSDDSYNSLLPLEKDIAVIIRDLSPQTNPDFEIDNPNRVIKGLVKDQLNEEDRSPIYCCGDDHAPNIDRNRFVIHNQSTFYSWFHNQKDVNIVISKSLVFTRNVTSDDPRIYSYESDNFFPIDKMGFEADSYNGPIKKNQWKDRWGFPRNFHFCLELHASFFYIGGELFSFKGDDDVWVFIDNRLVLDLGAPHDVSGQNGQGSVYLDNLGLEKSKSYNFDFFYCERHTTDSHIMVETSIDFKCKYYDYCGVCEGMGKCCNPSECYGSLPACGHFECPGLTDIAPNVDWRYHCKVVVPNCSLSDTFCVKHQCDPDSKQCVPSTDYQPCQGKSNSSCIEARCDDKMGGCYLKSKPKDQSKNDTTCYRETCNEDTSTWEYKALCEDDSDKCISKKCIPNSGCSSSVVDCNDNNHCTIDSCSKDTGCIHDPIENCVPCVEGNKCSESSDKCQQLECNPYNSTTECIDRTKKNCDDSNACTIDTCNGESGECENTPKQCLAKNKCSTARCNSKTGQCDNIYHCDDGILCTLDKCSENGTCYYEANPCDDGDQCTIDICLNTLTETGGCSHSARVCEPKNSCFTSHCDKKLGCVQTPIECPVEAFCLISFCDNSTKKCMTADRPCIPDDPRCQYGVCDNDTKACIFKDYDPLPFKCQSAAVKAAVGVGAGAAAGIAIGGAIALGLAAFGGKRGYDAWKSSRDNQIQTSSENPLYNPNPNQGDNPLYAANNS.

An N-terminal signal peptide occupies residues methionine 1–serine 23. The Extracellular segment spans residues aspartate 24–alanine 679. N-linked (GlcNAc...) asparagine glycosylation is found at asparagine 97 and asparagine 124. One can recognise a PA14 domain in the interval valine 125–methionine 276. N-linked (GlcNAc...) asparagine glycans are attached at residues asparagine 319, asparagine 353, asparagine 380, asparagine 477, asparagine 553, asparagine 628, and asparagine 654. A helical membrane pass occupies residues valine 680 to leucine 700. The Cytoplasmic portion of the chain corresponds to alanine 701 to serine 746. Residues serine 714–serine 746 form a disordered region. Over residues aspartate 717–serine 746 the composition is skewed to polar residues.

It belongs to the prespore-cell-inducing factor family.

The protein resides in the membrane. The protein is Protein psiN (psiN) of Dictyostelium discoideum (Social amoeba).